The sequence spans 827 residues: Transcription factor SOX-6 (827 aa).

A compositionally biased stretch (polar residues) spans 1–10; it reads MSSKQATSPF. The disordered stretch occupies residues 1 to 51; it reads MSSKQATSPFACTVDGEETMTQDLTSREKEEGSDQHPASHLPLHPIMHNKP. The segment covering 25–34 has biased composition (basic and acidic residues); that stretch reads TSREKEEGSD. The residue at position 119 (T119) is a Phosphothreonine. Residues 184 to 257 are a coiled coil; the sequence is LAEKERQLST…QHKINLLQQQ (74 aa). 2 disordered regions span residues 329-360 and 380-470; these read HVSHPQINPRLKGISDRLGRNLDPYEHGGGHS and SPGA…PIGG. Over residues 341-357 the composition is skewed to basic and acidic residues; it reads GISDRLGRNLDPYEHGG. S399 bears the Phosphoserine mark. A Phosphothreonine modification is found at T401. Residues K404 and K417 each participate in a glycyl lysine isopeptide (Lys-Gly) (interchain with G-Cter in SUMO) cross-link. 2 stretches are compositionally biased toward polar residues: residues 421-431 and 439-461; these read TAQPLNLSSRP and SPTSPTQSLFPASKTSPVNLPNK. Phosphoserine occurs at positions 439 and 442. Positions 620–688 form a DNA-binding region, HMG box; it reads IKRPMNAFMV…IHLEKYPNYK (69 aa). 2 disordered regions span residues 752–772 and 786–827; these read TPSPQMTSDCSSTSASPEPSL and ASLA…VSAN. Residues 795–808 are compositionally biased toward acidic residues; it reads NGEDEMEAYDDYED.

Homodimer. Interacts with DAZAP2. May interact with CENPK. Post-translationally, sumoylation inhibits the transcriptional activity.

Its subcellular location is the nucleus. It localises to the cytoplasm. Functionally, transcription factor that plays a key role in several developmental processes, including neurogenesis, chondrocytes differentiation and cartilage formation. Specifically binds the 5'-AACAAT-3' DNA motif present in enhancers and super-enhancers and promotes expression of genes important for chondrogenesis. Required for overt chondrogenesis when condensed prechondrocytes differentiate into early stage chondrocytes: SOX5 and SOX6 cooperatively bind with SOX9 on active enhancers and super-enhancers associated with cartilage-specific genes, and thereby potentiate SOX9's ability to transactivate. Not involved in precartilaginous condensation, the first step in chondrogenesis, during which skeletal progenitors differentiate into prechondrocytes. Together with SOX5, required to form and maintain a pool of highly proliferating chondroblasts between epiphyses and metaphyses, to form columnar chondroblasts, delay chondrocyte prehypertrophy but promote hypertrophy, and to delay terminal differentiation of chondrocytes on contact with ossification fronts. Binds to the proximal promoter region of the myelin protein MPZ gene, and is thereby involved in the differentiation of oligodendroglia in the developing spinal tube. Binds to the gene promoter of MBP and acts as a transcriptional repressor. In Rattus norvegicus (Rat), this protein is Transcription factor SOX-6.